Reading from the N-terminus, the 68-residue chain is Protein ShdD (68 aa).

Its function is as follows. Involved in the non-oxidative decarboxylation and detoxification of phenolic derivatives under anaerobic conditions, however the precise biochemical function of ShdD in metabolism of phenolic acid is unknown. The sequence is that of Protein ShdD from Sedimentibacter hydroxybenzoicus (Clostridium hydroxybenzoicum).